Here is a 123-residue protein sequence, read N- to C-terminus: Large ribosomal subunit protein uL14 (123 aa).

This sequence belongs to the universal ribosomal protein uL14 family. In terms of assembly, part of the 50S ribosomal subunit. Forms a cluster with proteins L3 and L19. In the 70S ribosome, L14 and L19 interact and together make contacts with the 16S rRNA in bridges B5 and B8.

Its function is as follows. Binds to 23S rRNA. Forms part of two intersubunit bridges in the 70S ribosome. In Tropheryma whipplei (strain TW08/27) (Whipple's bacillus), this protein is Large ribosomal subunit protein uL14.